The primary structure comprises 91 residues: DNA-directed RNA polymerase subunit Rpo11 (91 aa).

It belongs to the archaeal Rpo11/eukaryotic RPB11/RPC19 RNA polymerase subunit family. As to quaternary structure, part of the RNA polymerase complex.

The protein localises to the cytoplasm. The enzyme catalyses RNA(n) + a ribonucleoside 5'-triphosphate = RNA(n+1) + diphosphate. Its function is as follows. DNA-dependent RNA polymerase (RNAP) catalyzes the transcription of DNA into RNA using the four ribonucleoside triphosphates as substrates. The chain is DNA-directed RNA polymerase subunit Rpo11 from Methanococcoides burtonii (strain DSM 6242 / NBRC 107633 / OCM 468 / ACE-M).